The chain runs to 357 residues: N-acetyl-gamma-glutamyl-phosphate reductase (357 aa).

C160 is an active-site residue.

It belongs to the NAGSA dehydrogenase family. Type 1 subfamily.

The protein resides in the cytoplasm. The enzyme catalyses N-acetyl-L-glutamate 5-semialdehyde + phosphate + NADP(+) = N-acetyl-L-glutamyl 5-phosphate + NADPH + H(+). It participates in amino-acid biosynthesis; L-arginine biosynthesis; N(2)-acetyl-L-ornithine from L-glutamate: step 3/4. Functionally, catalyzes the NADPH-dependent reduction of N-acetyl-5-glutamyl phosphate to yield N-acetyl-L-glutamate 5-semialdehyde. This chain is N-acetyl-gamma-glutamyl-phosphate reductase, found in Prochlorococcus marinus (strain MIT 9313).